Consider the following 498-residue polypeptide: Calcium-dependent protein kinase 22 (498 aa).

Glycine 2 is lipidated: N-myristoyl glycine. In terms of domain architecture, Protein kinase spans 36–305; it reads YSFGDELGKG…AADVLEHPWM (270 aa). ATP-binding positions include 42–50 and lysine 65; that span reads LGKGNFGTT. Catalysis depends on aspartate 164, which acts as the Proton acceptor. Residue serine 204 is modified to Phosphoserine. Residues 309–339 are autoinhibitory domain; it reads APDKPIDNVVLSRMKQFRAMNKLKKLALKVI. 4 consecutive EF-hand domains span residues 346–381, 382–417, 418–453, and 454–488; these read EEIK…HGSK, LSET…RHRL, ERDE…HGMG, and DEAN…GILQ. The Ca(2+) site is built by aspartate 359, aspartate 361, serine 363, serine 365, glutamate 370, aspartate 395, aspartate 397, asparagine 399, threonine 401, glutamate 406, aspartate 431, aspartate 433, serine 435, histidine 437, glutamate 442, aspartate 466, asparagine 468, aspartate 470, lysine 472, and glutamate 477.

It belongs to the protein kinase superfamily. Ser/Thr protein kinase family. CDPK subfamily.

It localises to the membrane. It carries out the reaction L-seryl-[protein] + ATP = O-phospho-L-seryl-[protein] + ADP + H(+). It catalyses the reaction L-threonyl-[protein] + ATP = O-phospho-L-threonyl-[protein] + ADP + H(+). Activated by calcium. Autophosphorylation may play an important role in the regulation of the kinase activity. May play a role in signal transduction pathways that involve calcium as a second messenger. The sequence is that of Calcium-dependent protein kinase 22 (CPK22) from Arabidopsis thaliana (Mouse-ear cress).